Reading from the N-terminus, the 200-residue chain is Protein GrpE (200 aa).

The segment covering 1-23 (MEEEIKETSEDKEEENTEAEAVE) has biased composition (acidic residues). A disordered region spans residues 1–39 (MEEEIKETSEDKEEENTEAEAVENNEKSEENAGNVEEDE).

This sequence belongs to the GrpE family. Homodimer.

It is found in the cytoplasm. Participates actively in the response to hyperosmotic and heat shock by preventing the aggregation of stress-denatured proteins, in association with DnaK and GrpE. It is the nucleotide exchange factor for DnaK and may function as a thermosensor. Unfolded proteins bind initially to DnaJ; upon interaction with the DnaJ-bound protein, DnaK hydrolyzes its bound ATP, resulting in the formation of a stable complex. GrpE releases ADP from DnaK; ATP binding to DnaK triggers the release of the substrate protein, thus completing the reaction cycle. Several rounds of ATP-dependent interactions between DnaJ, DnaK and GrpE are required for fully efficient folding. The sequence is that of Protein GrpE from Brachyspira hyodysenteriae (strain ATCC 49526 / WA1).